Reading from the N-terminus, the 134-residue chain is Putative toxin MJ0605 (134 aa).

It belongs to the UPF0332 family.

Putative toxin component of a putative type VII toxin-antitoxin (TA) system. Its cognate antitoxin might be MJ0604. This is Putative toxin MJ0605 from Methanocaldococcus jannaschii (strain ATCC 43067 / DSM 2661 / JAL-1 / JCM 10045 / NBRC 100440) (Methanococcus jannaschii).